Here is a 147-residue protein sequence, read N- to C-terminus: Lysozyme C (147 aa).

The signal sequence occupies residues 1-18; that stretch reads MKVLLLLGFIFCSMAAHG. Positions 19 to 147 constitute a C-type lysozyme domain; that stretch reads KRMERCEFAR…LSKYLEGCHL (129 aa). 4 disulfide bridges follow: cysteine 24–cysteine 145, cysteine 48–cysteine 133, cysteine 83–cysteine 99, and cysteine 95–cysteine 113. Active-site residues include glutamate 53 and aspartate 71.

Belongs to the glycosyl hydrolase 22 family. In terms of assembly, monomer.

It is found in the secreted. The enzyme catalyses Hydrolysis of (1-&gt;4)-beta-linkages between N-acetylmuramic acid and N-acetyl-D-glucosamine residues in a peptidoglycan and between N-acetyl-D-glucosamine residues in chitodextrins.. Functionally, lysozymes have primarily a bacteriolytic function; those in tissues and body fluids are associated with the monocyte-macrophage system and enhance the activity of immunoagents. This is Lysozyme C (LYZ) from Trichosurus vulpecula (Brush-tailed possum).